The sequence spans 284 residues: Bifunctional protein FolD (284 aa).

NADP(+) contacts are provided by residues 164-166 (GRS) and Ser189.

The protein belongs to the tetrahydrofolate dehydrogenase/cyclohydrolase family. In terms of assembly, homodimer.

The enzyme catalyses (6R)-5,10-methylene-5,6,7,8-tetrahydrofolate + NADP(+) = (6R)-5,10-methenyltetrahydrofolate + NADPH. The catalysed reaction is (6R)-5,10-methenyltetrahydrofolate + H2O = (6R)-10-formyltetrahydrofolate + H(+). It functions in the pathway one-carbon metabolism; tetrahydrofolate interconversion. Functionally, catalyzes the oxidation of 5,10-methylenetetrahydrofolate to 5,10-methenyltetrahydrofolate and then the hydrolysis of 5,10-methenyltetrahydrofolate to 10-formyltetrahydrofolate. This is Bifunctional protein FolD from Listeria monocytogenes serotype 4b (strain F2365).